Consider the following 300-residue polypeptide: tRNA pseudouridine synthase B (300 aa).

D44 serves as the catalytic Nucleophile.

It belongs to the pseudouridine synthase TruB family. Type 1 subfamily.

It carries out the reaction uridine(55) in tRNA = pseudouridine(55) in tRNA. Responsible for synthesis of pseudouridine from uracil-55 in the psi GC loop of transfer RNAs. The protein is tRNA pseudouridine synthase B of Corynebacterium diphtheriae (strain ATCC 700971 / NCTC 13129 / Biotype gravis).